Reading from the N-terminus, the 1826-residue chain is Kinesin-like protein KIF13B (1826 aa).

A Kinesin motor domain is found at 5-353; the sequence is KVKVAVRIRP…LRYADRAKHI (349 aa). 103 to 110 provides a ligand contact to ATP; that stretch reads GQTGSGKS. Positions 364-439 form a coiled coil; that stretch reads NARIIRDLRE…ESLGISLQSS (76 aa). Positions 471 to 535 constitute an FHA domain; sequence TLIGSANSQD…LHHGDRILWG (65 aa). The disordered stretch occupies residues 546–582; that stretch reads KKKKKAEREDEDQDPSMKNENSSEQLDVDGDSSSEVS. Polar residues predominate over residues 561 to 570; sequence SMKNENSSEQ. Coiled coils occupy residues 607 to 710, 752 to 772, and 1096 to 1143; these read MQSI…LDKR, SLEKLDNRLLDMRDLYQEWKE, and LNAL…ERNA. S661 bears the Phosphoserine mark. The tract at residues 1367–1420 is disordered; it reads EQLTGKGKLSRRSISSPNVNRLSGSRQDLIPSYSLGSNKGRWESQQDVSQTTVS. 2 stretches are compositionally biased toward polar residues: residues 1378 to 1392 and 1409 to 1420; these read RSISSPNVNRLSGSR and ESQQDVSQTTVS. Phosphoserine is present on S1379. At S1381 the chain carries Phosphoserine; by MARK2. Residues S1382 and S1391 each carry the phosphoserine modification. S1410 carries the phosphoserine; by MARK2 modification. 3 positions are modified to phosphoserine: S1432, S1438, and S1537. At T1545 the chain carries Phosphothreonine. S1559 is modified (phosphoserine). A compositionally biased stretch (low complexity) spans 1579 to 1607; the sequence is SDALGPGLDAAAPPGSMPTAPEAEPEAPI. 2 disordered regions span residues 1579-1650 and 1662-1698; these read SDAL…RVRR and MLAGDPGCSPGAEGNAPAPGAGGQALASDSEEADEVP. The segment covering 1608 to 1624 has biased composition (pro residues); the sequence is SHPPPPTAVPAEEPPGP. A Phosphoserine modification is found at S1644. Low complexity predominate over residues 1671 to 1688; that stretch reads PGAEGNAPAPGAGGQALA. Positions 1721-1763 constitute a CAP-Gly domain; the sequence is GPADFQEGTWVGVELDLPSGKNDGSIGGKQYFRCNPGYGLLVR. The residue at position 1797 (S1797) is a Phosphoserine.

This sequence belongs to the TRAFAC class myosin-kinesin ATPase superfamily. Kinesin family. In terms of assembly, binds to DLG1 and DLG4. Interacts (when phosphorylated at Ser-1381 and Ser-1410) with 14-3-3. Phosphorylated at Ser-1381 and Ser-1410 by MARK2, promoting interaction with 14-3-3 and inhibiting microtubule-dependent accumulation and formation of axons. Ubiquitous.

It is found in the cytoplasm. It localises to the cytoskeleton. The protein resides in the cell projection. Its subcellular location is the axon. Involved in reorganization of the cortical cytoskeleton. Regulates axon formation by promoting the formation of extra axons. May be functionally important for the intracellular trafficking of MAGUKs and associated protein complexes. This chain is Kinesin-like protein KIF13B (KIF13B), found in Homo sapiens (Human).